The chain runs to 250 residues: Petrobactin import ATP-binding protein FatE (250 aa).

Residues 2–236 (IKIDNVKKFY…TLLTDIFETR (235 aa)) form the ABC transporter domain. 34 to 41 (GPNGAGKS) provides a ligand contact to ATP.

The protein belongs to the ABC transporter superfamily. In terms of assembly, the complex is composed of two ATP-binding proteins (FatE), two transmembrane proteins (FatC and FatD) and a solute-binding protein (FpuA).

It localises to the cell membrane. It catalyses the reaction a Fe(III)-siderophore(out) + ATP + H2O = a Fe(III)-siderophore(in) + ADP + phosphate + H(+). Its function is as follows. Part of an ABC transporter complex involved in ferric-petrobactin uptake. Probably responsible for energy coupling to the transport system. The chain is Petrobactin import ATP-binding protein FatE from Bacillus anthracis.